The chain runs to 480 residues: Siroheme synthase 1 (480 aa).

The tract at residues 1–203 is precorrin-2 dehydrogenase /sirohydrochlorin ferrochelatase; sequence MNYLPIFADL…GQLEQAEGEL (203 aa). NAD(+) contacts are provided by residues 22–23 and 43–44; these read EV and LA. S128 is subject to Phosphoserine. The tract at residues 222-480 is uroporphyrinogen-III C-methyltransferase; it reads GEVALVGAGP…DSRPAVVNLA (259 aa). P231 provides a ligand contact to S-adenosyl-L-methionine. The active-site Proton acceptor is D254. The active-site Proton donor is K276. Residues 307 to 309, I312, 337 to 338, M389, and G418 each bind S-adenosyl-L-methionine; these read GGD and TA.

This sequence in the N-terminal section; belongs to the precorrin-2 dehydrogenase / sirohydrochlorin ferrochelatase family. In the C-terminal section; belongs to the precorrin methyltransferase family.

It carries out the reaction uroporphyrinogen III + 2 S-adenosyl-L-methionine = precorrin-2 + 2 S-adenosyl-L-homocysteine + H(+). The catalysed reaction is precorrin-2 + NAD(+) = sirohydrochlorin + NADH + 2 H(+). The enzyme catalyses siroheme + 2 H(+) = sirohydrochlorin + Fe(2+). It participates in cofactor biosynthesis; adenosylcobalamin biosynthesis; precorrin-2 from uroporphyrinogen III: step 1/1. It functions in the pathway cofactor biosynthesis; adenosylcobalamin biosynthesis; sirohydrochlorin from precorrin-2: step 1/1. The protein operates within porphyrin-containing compound metabolism; siroheme biosynthesis; precorrin-2 from uroporphyrinogen III: step 1/1. Its pathway is porphyrin-containing compound metabolism; siroheme biosynthesis; siroheme from sirohydrochlorin: step 1/1. It participates in porphyrin-containing compound metabolism; siroheme biosynthesis; sirohydrochlorin from precorrin-2: step 1/1. Its function is as follows. Multifunctional enzyme that catalyzes the SAM-dependent methylations of uroporphyrinogen III at position C-2 and C-7 to form precorrin-2 via precorrin-1. Then it catalyzes the NAD-dependent ring dehydrogenation of precorrin-2 to yield sirohydrochlorin. Finally, it catalyzes the ferrochelation of sirohydrochlorin to yield siroheme. This chain is Siroheme synthase 1, found in Pectobacterium atrosepticum (strain SCRI 1043 / ATCC BAA-672) (Erwinia carotovora subsp. atroseptica).